We begin with the raw amino-acid sequence, 425 residues long: Exodeoxyribonuclease 7 large subunit (425 aa).

This sequence belongs to the XseA family. In terms of assembly, heterooligomer composed of large and small subunits.

The protein resides in the cytoplasm. It carries out the reaction Exonucleolytic cleavage in either 5'- to 3'- or 3'- to 5'-direction to yield nucleoside 5'-phosphates.. In terms of biological role, bidirectionally degrades single-stranded DNA into large acid-insoluble oligonucleotides, which are then degraded further into small acid-soluble oligonucleotides. The protein is Exodeoxyribonuclease 7 large subunit of Nocardia farcinica (strain IFM 10152).